The following is a 444-amino-acid chain: E3 ubiquitin-protein ligase APD2 (444 aa).

Positions 1–15 (MSLPDSLPSSSSSPP) are enriched in low complexity. The interval 1 to 41 (MSLPDSLPSSSSSPPVTREETGFHRFEHHGNDSGFDHRDRP) is disordered. Residues 17–41 (TREETGFHRFEHHGNDSGFDHRDRP) are compositionally biased toward basic and acidic residues. Helical transmembrane passes span 74-94 (VVVV…GLYG) and 312-332 (IAYI…SSLF). An RING-type zinc finger spans residues 393–432 (CAICYDAPRDCFFLSCGHCVACFQCGTRIAETSGFCPVCR).

As to quaternary structure, interacts with At1g78040, At1g10650, VHA-c4/AVAP4, VHA-c''2/VMA16 and TUFA. As to expression, expressed in the shoot apical meristems (SAM), root tips, pollen and inflorescences.

The protein resides in the endomembrane system. The catalysed reaction is S-ubiquitinyl-[E2 ubiquitin-conjugating enzyme]-L-cysteine + [acceptor protein]-L-lysine = [E2 ubiquitin-conjugating enzyme]-L-cysteine + N(6)-ubiquitinyl-[acceptor protein]-L-lysine.. The protein operates within protein modification; protein ubiquitination. Functionally, exhibits E2-dependent E3 ligase activity. Involved in pollen mitosis II (PMII) regulation during male gametogenesis. The sequence is that of E3 ubiquitin-protein ligase APD2 from Arabidopsis thaliana (Mouse-ear cress).